Here is a 312-residue protein sequence, read N- to C-terminus: DNA-directed RNA polymerase subunit alpha (312 aa).

The alpha N-terminal domain (alpha-NTD) stretch occupies residues 1–226 (MIEFEKPRIE…EHLDIFVNLT (226 aa)). An alpha C-terminal domain (alpha-CTD) region spans residues 243–312 (KEKMLEMTIE…DLGLGLRKDD (70 aa)).

The protein belongs to the RNA polymerase alpha chain family. Homodimer. The RNAP catalytic core consists of 2 alpha, 1 beta, 1 beta' and 1 omega subunit. When a sigma factor is associated with the core the holoenzyme is formed, which can initiate transcription.

The enzyme catalyses RNA(n) + a ribonucleoside 5'-triphosphate = RNA(n+1) + diphosphate. DNA-dependent RNA polymerase catalyzes the transcription of DNA into RNA using the four ribonucleoside triphosphates as substrates. The sequence is that of DNA-directed RNA polymerase subunit alpha from Enterococcus faecalis (strain ATCC 700802 / V583).